A 254-amino-acid polypeptide reads, in one-letter code: MLKIADVEFESRLFTGTGKFSNSQVMIEAIMASKSQLVTVAMKRIDFKMGLDDLLTPLRQAGVRLLPNTSGARNAKEAVFAAELAREMLGTHWIKLEIHPDPKYLMPDAIETLEAARILCEKGFIVLPYVHADPVLCRRLEEVGCAAVMPLASPIGSNQGLVTESFLKIIIEQARVPVVIDAGIGAPSQAARAMELGADAVLVNTAIASSASPIVMAECFKEAVQCGRRAFEAGLGRVQTGAVQTSPLTGFLNQ.

Lysine 95 acts as the Schiff-base intermediate with DXP in catalysis. 1-deoxy-D-xylulose 5-phosphate contacts are provided by residues glycine 156, alanine 182–glycine 183, and asparagine 204–threonine 205.

This sequence belongs to the ThiG family. Homotetramer. Forms heterodimers with either ThiH or ThiS.

The protein localises to the cytoplasm. The catalysed reaction is [ThiS sulfur-carrier protein]-C-terminal-Gly-aminoethanethioate + 2-iminoacetate + 1-deoxy-D-xylulose 5-phosphate = [ThiS sulfur-carrier protein]-C-terminal Gly-Gly + 2-[(2R,5Z)-2-carboxy-4-methylthiazol-5(2H)-ylidene]ethyl phosphate + 2 H2O + H(+). Its pathway is cofactor biosynthesis; thiamine diphosphate biosynthesis. Functionally, catalyzes the rearrangement of 1-deoxy-D-xylulose 5-phosphate (DXP) to produce the thiazole phosphate moiety of thiamine. Sulfur is provided by the thiocarboxylate moiety of the carrier protein ThiS. In vitro, sulfur can be provided by H(2)S. This is Thiazole synthase from Shewanella putrefaciens (strain CN-32 / ATCC BAA-453).